The sequence spans 584 residues: Ubiquitin-like-specific protease 1D (584 aa).

2 disordered regions span residues 28–64 (DKED…PKLL) and 99–323 (DLEE…QAAE). A compositionally biased stretch (basic and acidic residues) spans 99 to 120 (DLEEEKQRRVLEGSKMEVDRSS). Over residues 121 to 132 (KVVSSTSSGSDV) the composition is skewed to low complexity. 2 stretches are compositionally biased toward basic and acidic residues: residues 142 to 165 (DTSR…KEVS) and 176 to 196 (PKTD…LGCE). Basic residues predominate over residues 197–207 (RRKHKAGRKPV). Positions 221 to 253 (GKAEHSAKQFDSGLKESKGNKKSKEPYGKKRPM) are enriched in basic and acidic residues. Residues 261–274 (IDDDDDDDDDDDND) show a composition bias toward acidic residues. Over residues 275–286 (TSGHETPREWSW) the composition is skewed to basic and acidic residues. Active-site residues include H438, D461, and C525.

This sequence belongs to the peptidase C48 family.

It localises to the nucleus speckle. Protease that catalyzes two essential functions in the SUMO pathway: processing of full-length SUMOs to their mature forms and deconjugation of SUMO from targeted proteins. Cleaves precursors of SUM1 and SUM2, but not of SUM3 or SUM5. Able to release SUM1 and SUM2 from conjugates, but unable to cleave SUM3. Protease activity mainly directed at deconjugating SUM1 and SUM2 from their target proteins. Regulates salt stress responses and flowering time. Redundant with ULP1C. The chain is Ubiquitin-like-specific protease 1D (ULP1D) from Arabidopsis thaliana (Mouse-ear cress).